The following is a 286-amino-acid chain: 4-hydroxybenzoate octaprenyltransferase (286 aa).

The next 7 membrane-spanning stretches (helical) occupy residues 20–40, 43–63, 96–116, 142–162, 167–187, 210–230, and 234–254; these read IGTL…AGGM, LKVL…GCII, LFVV…PLVV, FLGV…TGTV, WWLF…YAMV, QVIA…GWAA, and LVYA…QKLI.

The protein belongs to the UbiA prenyltransferase family. Requires Mg(2+) as cofactor.

The protein localises to the cell inner membrane. The catalysed reaction is all-trans-octaprenyl diphosphate + 4-hydroxybenzoate = 4-hydroxy-3-(all-trans-octaprenyl)benzoate + diphosphate. It functions in the pathway cofactor biosynthesis; ubiquinone biosynthesis. In terms of biological role, catalyzes the prenylation of para-hydroxybenzoate (PHB) with an all-trans polyprenyl group. Mediates the second step in the final reaction sequence of ubiquinone-8 (UQ-8) biosynthesis, which is the condensation of the polyisoprenoid side chain with PHB, generating the first membrane-bound Q intermediate 3-octaprenyl-4-hydroxybenzoate. The sequence is that of 4-hydroxybenzoate octaprenyltransferase from Shewanella woodyi (strain ATCC 51908 / MS32).